A 240-amino-acid chain; its full sequence is Pyridoxine 5'-phosphate synthase (240 aa).

Asparagine 6 provides a ligand contact to 3-amino-2-oxopropyl phosphate. Residue 8-9 coordinates 1-deoxy-D-xylulose 5-phosphate; sequence DH. Arginine 17 contributes to the 3-amino-2-oxopropyl phosphate binding site. Residue histidine 42 is the Proton acceptor of the active site. Residues arginine 44 and histidine 49 each contribute to the 1-deoxy-D-xylulose 5-phosphate site. The Proton acceptor role is filled by glutamate 69. 1-deoxy-D-xylulose 5-phosphate is bound at residue threonine 99. Residue histidine 193 is the Proton donor of the active site. Residues glycine 194 and 216-217 contribute to the 3-amino-2-oxopropyl phosphate site; that span reads GH.

The protein belongs to the PNP synthase family. As to quaternary structure, homooctamer; tetramer of dimers.

It localises to the cytoplasm. It carries out the reaction 3-amino-2-oxopropyl phosphate + 1-deoxy-D-xylulose 5-phosphate = pyridoxine 5'-phosphate + phosphate + 2 H2O + H(+). It functions in the pathway cofactor biosynthesis; pyridoxine 5'-phosphate biosynthesis; pyridoxine 5'-phosphate from D-erythrose 4-phosphate: step 5/5. Catalyzes the complicated ring closure reaction between the two acyclic compounds 1-deoxy-D-xylulose-5-phosphate (DXP) and 3-amino-2-oxopropyl phosphate (1-amino-acetone-3-phosphate or AAP) to form pyridoxine 5'-phosphate (PNP) and inorganic phosphate. In Hydrogenobaculum sp. (strain Y04AAS1), this protein is Pyridoxine 5'-phosphate synthase.